A 477-amino-acid polypeptide reads, in one-letter code: MKVTLPEFERAGVMVVGDVMLDRYWYGPTSRISPEAPVPVVKVNTIEERPGGAANVAMNIASLGANARLVGLTGIDDAARALSKSLADVNVKCDFVSVPTHPTITKLRVLSRNQQLIRLDFEEGFEGVDPQPLHERINQALSSIGALVLSDYAKGALASVQQMIQLARKAGVPVLIDPKGTDFERYRGATLLTPNLSEFEAVVGKCKTEEEIVERGMKLIADYELSALLVTRSEQGMSLLQPGKAPLHMPTQAQEVYDVTGAGDTVIGVLAATLAAGNSLEEACFFANAAAGVVVGKLGTSTVSPIELENAVRGRADTGFGVMTEEELKLAVAAARKRGEKVVMTNGVFDILHAGHVFYLANARKLGDRLIVAVNSDASTKRLKGDSRPVNPLEQRMIVLGALEAVDWVVSFEEDTPQRLIAGILPDLLVKGGDYKPEEIAGSKEVWANGGEVLVLNFEDGCSTTNIIKKIQQDKKG.

Positions 1–318 are ribokinase; it reads MKVTLPEFER…ENAVRGRADT (318 aa). Lys-179 carries the post-translational modification N6-acetyllysine. 195–198 contacts ATP; sequence NLSE. Residue Asp-264 is part of the active site. The interval 344–477 is cytidylyltransferase; sequence MTNGVFDILH…IKKIQQDKKG (134 aa).

It in the N-terminal section; belongs to the carbohydrate kinase PfkB family. The protein in the C-terminal section; belongs to the cytidylyltransferase family. In terms of assembly, homodimer.

The enzyme catalyses D-glycero-beta-D-manno-heptose 7-phosphate + ATP = D-glycero-beta-D-manno-heptose 1,7-bisphosphate + ADP + H(+). It catalyses the reaction D-glycero-beta-D-manno-heptose 1-phosphate + ATP + H(+) = ADP-D-glycero-beta-D-manno-heptose + diphosphate. The protein operates within nucleotide-sugar biosynthesis; ADP-L-glycero-beta-D-manno-heptose biosynthesis; ADP-L-glycero-beta-D-manno-heptose from D-glycero-beta-D-manno-heptose 7-phosphate: step 1/4. It functions in the pathway nucleotide-sugar biosynthesis; ADP-L-glycero-beta-D-manno-heptose biosynthesis; ADP-L-glycero-beta-D-manno-heptose from D-glycero-beta-D-manno-heptose 7-phosphate: step 3/4. Its function is as follows. Catalyzes the phosphorylation of D-glycero-D-manno-heptose 7-phosphate at the C-1 position to selectively form D-glycero-beta-D-manno-heptose-1,7-bisphosphate. Functionally, catalyzes the ADP transfer from ATP to D-glycero-beta-D-manno-heptose 1-phosphate, yielding ADP-D-glycero-beta-D-manno-heptose. This Shigella flexneri serotype 5b (strain 8401) protein is Bifunctional protein HldE.